Reading from the N-terminus, the 58-residue chain is U7-ctenitoxin-Pr1a (58 aa).

6 disulfide bridges follow: Cys2/Cys16, Cys9/Cys22, Cys13/Cys48, Cys15/Cys40, Cys18/Cys55, and Cys24/Cys38.

As to expression, expressed by the venom gland.

The protein resides in the secreted. Its function is as follows. Probable neurotoxin. This chain is U7-ctenitoxin-Pr1a, found in Phoneutria reidyi (Brazilian Amazonian armed spider).